A 416-amino-acid chain; its full sequence is MFSFYFNDNKITKLLMVGYGSTGKSVCDFLANFIDITVDISQNDDEFVNYDLNSYDLITVSPGIPLNKSPYRALTKFKDKIVSDIDIFYQYIKDTKAKTIAVTGSNGKSTVVTMTDFVLKDLGYKSILVGNIGTPALNKIGEKFDYCVVEVSSFQINLFNCVRFDLGCIINVSPDHLDRYQNFEQYKQSKLNLAKFSNDFFVYDVHNGIKYAGEYQIIRGAIYRNSTKLLDIVETKLFGEHNLENIIVVLNILDRLGLDINQAIDSIKKFKGLEHRCKIIKKVNGTTYINDSKGTNVGATIAALNSITNSKNIILLLGGVAKGGDFSLMIKSLDKYVKYVYIYGVDKEYIESYIKGYCKYQLCNNMKQAFELASQKANSNEIVLLSPACASFDEFSGYAQRGEVFQNLVAQLEQKS.

104–110 is an ATP binding site; sequence GSNGKST.

It belongs to the MurCDEF family.

The protein localises to the cytoplasm. The catalysed reaction is UDP-N-acetyl-alpha-D-muramoyl-L-alanine + D-glutamate + ATP = UDP-N-acetyl-alpha-D-muramoyl-L-alanyl-D-glutamate + ADP + phosphate + H(+). It participates in cell wall biogenesis; peptidoglycan biosynthesis. In terms of biological role, cell wall formation. Catalyzes the addition of glutamate to the nucleotide precursor UDP-N-acetylmuramoyl-L-alanine (UMA). In Francisella tularensis subsp. mediasiatica (strain FSC147), this protein is UDP-N-acetylmuramoylalanine--D-glutamate ligase.